We begin with the raw amino-acid sequence, 448 residues long: Phosphohexose mutases (448 aa).

The Phosphoserine intermediate role is filled by Ser-97. Mg(2+) is bound by residues Ser-97, Asp-237, Asp-239, and Asp-241.

This sequence belongs to the phosphohexose mutase family. Requires Mg(2+) as cofactor.

The catalysed reaction is alpha-D-glucose 1-phosphate = alpha-D-glucose 6-phosphate. The enzyme catalyses alpha-D-mannose 1-phosphate = D-mannose 6-phosphate. Its pathway is nucleotide-sugar biosynthesis; GDP-alpha-D-mannose biosynthesis; alpha-D-mannose 1-phosphate from D-fructose 6-phosphate: step 2/2. In terms of biological role, involved in xanthan production. This is Phosphohexose mutases (xanA) from Xanthomonas campestris pv. campestris (strain ATCC 33913 / DSM 3586 / NCPPB 528 / LMG 568 / P 25).